A 207-amino-acid chain; its full sequence is Octanoyltransferase (207 aa).

The 177-residue stretch at 27-203 (ADTEDELWVV…HLETQFTPKA (177 aa)) folds into the BPL/LPL catalytic domain. Substrate contacts are provided by residues 66–73 (RGGQITYH), 133–135 (SLG), and 146–148 (GLA). The Acyl-thioester intermediate role is filled by Cys164.

It belongs to the LipB family.

It is found in the cytoplasm. The catalysed reaction is octanoyl-[ACP] + L-lysyl-[protein] = N(6)-octanoyl-L-lysyl-[protein] + holo-[ACP] + H(+). Its pathway is protein modification; protein lipoylation via endogenous pathway; protein N(6)-(lipoyl)lysine from octanoyl-[acyl-carrier-protein]: step 1/2. In terms of biological role, catalyzes the transfer of endogenously produced octanoic acid from octanoyl-acyl-carrier-protein onto the lipoyl domains of lipoate-dependent enzymes. Lipoyl-ACP can also act as a substrate although octanoyl-ACP is likely to be the physiological substrate. The sequence is that of Octanoyltransferase from Neisseria meningitidis serogroup A / serotype 4A (strain DSM 15465 / Z2491).